Here is a 31-residue protein sequence, read N- to C-terminus: Ranatuerin-2 (31 aa).

A disulfide bridge connects residues C23 and C28.

Belongs to the frog skin active peptide (FSAP) family. Ranatuerin subfamily. In terms of tissue distribution, expressed by the skin glands.

The protein localises to the secreted. Functionally, antibacterial activity against Gram-positive bacterium S.aureus (MIC=60 uM). Shows no detectable hemolytic activity towards human erythrocytes. The protein is Ranatuerin-2 of Aquarana catesbeiana (American bullfrog).